The following is a 360-amino-acid chain: Probable cinnamyl alcohol dehydrogenase 1 (360 aa).

Zn(2+) is bound at residue Cys-47. Thr-49 lines the NADP(+) pocket. Residues His-69, Glu-70, Cys-100, Cys-103, Cys-106, Cys-114, and Cys-163 each coordinate Zn(2+). Residues Thr-167, 189 to 194 (GLGGVG), 212 to 217 (SSSDKK), Thr-252, Gly-276, and 299 to 301 (SFI) each bind NADP(+).

This sequence belongs to the zinc-containing alcohol dehydrogenase family. Homodimer. It depends on Zn(2+) as a cofactor.

It carries out the reaction (E)-cinnamyl alcohol + NADP(+) = (E)-cinnamaldehyde + NADPH + H(+). The enzyme catalyses (E)-coniferol + NADP(+) = (E)-coniferaldehyde + NADPH + H(+). The catalysed reaction is (E)-sinapyl alcohol + NADP(+) = (E)-sinapaldehyde + NADPH + H(+). It catalyses the reaction (E)-4-coumaroyl alcohol + NADP(+) = (E)-4-coumaraldehyde + NADPH + H(+). It carries out the reaction (E)-caffeyl alcohol + NADP(+) = (E)-caffeyl aldehyde + NADPH + H(+). It functions in the pathway aromatic compound metabolism; phenylpropanoid biosynthesis. Functionally, involved in lignin biosynthesis. Catalyzes the final step specific for the production of lignin monomers. Catalyzes the NADPH-dependent reduction of coniferaldehyde, 5-hydroxyconiferaldehyde, sinapaldehyde, 4-coumaraldehyde and caffeyl aldehyde to their respective alcohols. The sequence is that of Probable cinnamyl alcohol dehydrogenase 1 (CAD1) from Aralia cordata (Udo).